The primary structure comprises 329 residues: Pantothenate kinase (329 aa).

Residue 107–114 (GSVAVGKS) participates in ATP binding.

The protein belongs to the prokaryotic pantothenate kinase family.

The protein localises to the cytoplasm. It carries out the reaction (R)-pantothenate + ATP = (R)-4'-phosphopantothenate + ADP + H(+). It functions in the pathway cofactor biosynthesis; coenzyme A biosynthesis; CoA from (R)-pantothenate: step 1/5. This Streptomyces avermitilis (strain ATCC 31267 / DSM 46492 / JCM 5070 / NBRC 14893 / NCIMB 12804 / NRRL 8165 / MA-4680) protein is Pantothenate kinase.